A 116-amino-acid polypeptide reads, in one-letter code: Aspartate 1-decarboxylase (116 aa).

Residue S25 is the Schiff-base intermediate with substrate; via pyruvic acid of the active site. Pyruvic acid (Ser) is present on S25. T57 serves as a coordination point for substrate. Y58 serves as the catalytic Proton donor. 73 to 75 (GAA) is a substrate binding site.

This sequence belongs to the PanD family. Heterooctamer of four alpha and four beta subunits. Pyruvate is required as a cofactor. Post-translationally, is synthesized initially as an inactive proenzyme, which is activated by self-cleavage at a specific serine bond to produce a beta-subunit with a hydroxyl group at its C-terminus and an alpha-subunit with a pyruvoyl group at its N-terminus.

The protein localises to the cytoplasm. The catalysed reaction is L-aspartate + H(+) = beta-alanine + CO2. It participates in cofactor biosynthesis; (R)-pantothenate biosynthesis; beta-alanine from L-aspartate: step 1/1. In terms of biological role, catalyzes the pyruvoyl-dependent decarboxylation of aspartate to produce beta-alanine. The chain is Aspartate 1-decarboxylase from Parabacteroides distasonis (strain ATCC 8503 / DSM 20701 / CIP 104284 / JCM 5825 / NCTC 11152).